A 309-amino-acid polypeptide reads, in one-letter code: uncharacterized protein (309 aa).

A signal peptide (tat-type signal) is located at residues 1-32 (MTGTAPVSRRQYLGTAGAIIGTTAGCLTGADA).

The protein belongs to the bacterial solute-binding protein 1 family. WtpA subfamily. In terms of processing, predicted to be exported by the Tat system. The position of the signal peptide cleavage has not been experimentally proven.

This is an uncharacterized protein from Halobacterium salinarum (strain ATCC 700922 / JCM 11081 / NRC-1) (Halobacterium halobium).